We begin with the raw amino-acid sequence, 124 residues long: Insulin growth factor-like family member 4 (124 aa).

The signal sequence occupies residues 1-19 (MVPRISAAIFIFELLGSNS). Asn-57 and Asn-84 each carry an N-linked (GlcNAc...) asparagine glycan.

Belongs to the IGFL family. Detected in the cerebellum.

It is found in the secreted. In Homo sapiens (Human), this protein is Insulin growth factor-like family member 4 (IGFL4).